The following is a 542-amino-acid chain: Formate--tetrahydrofolate ligase (542 aa).

53–60 (TPAGEGKT) contacts ATP.

This sequence belongs to the formate--tetrahydrofolate ligase family.

The catalysed reaction is (6S)-5,6,7,8-tetrahydrofolate + formate + ATP = (6R)-10-formyltetrahydrofolate + ADP + phosphate. It functions in the pathway one-carbon metabolism; tetrahydrofolate interconversion. In Thermotoga maritima (strain ATCC 43589 / DSM 3109 / JCM 10099 / NBRC 100826 / MSB8), this protein is Formate--tetrahydrofolate ligase.